The primary structure comprises 263 residues: UPF0758 protein Pden_2304 (263 aa).

The MPN domain occupies 141 to 263 (VLTSWDALLD…ELSFRSEGLL (123 aa)). Zn(2+) is bound by residues H212, H214, and D225. Positions 212–225 (HNHPSGDPTPSQAD) match the JAMM motif motif.

This sequence belongs to the UPF0758 family.

In Paracoccus denitrificans (strain Pd 1222), this protein is UPF0758 protein Pden_2304.